The primary structure comprises 230 residues: MEGQRWLPLEANPEVTNQFLKQLGLHPNWQFVDVYGMDPELLSMVPRPVCAVLLLFPITEKYEVFRTEEEEKIKSQGQDVTSSVYFMKQTISNACGTIGLIHAIANNKDKMHFESGSTLKKFLEESASMSPEERARYLENYDAIRVTHETSAHEGQTEAPNIDEKVDLHFIALVHVDGHLYELDGRKPFPINHGETSDETLLEDAIEVCKKFMERDPDELRFNAIALSAA.

Residues 5–229 enclose the UCH catalytic domain; sequence RWLPLEANPE…LRFNAIALSA (225 aa). Residues 8 to 13 form an interaction with ubiquitin region; the sequence is PLEANP. The active-site Nucleophile is the C95. S130 is subject to Phosphoserine. Positions 152–159 are interaction with ubiquitin. Crossover loop which restricts access of large ubiquitin adducts to the active site; that stretch reads AHEGQTEA. Catalysis depends on H169, which acts as the Proton donor. The tract at residues 219 to 224 is interaction with ubiquitin; that stretch reads ELRFNA.

This sequence belongs to the peptidase C12 family. As to quaternary structure, preferentially binds diubiquitin; the interaction does not hydrolyze diubiquitin but, in vitro, inhibits the hydrolyzing activity on other substrates.

Its subcellular location is the cytoplasm. It catalyses the reaction Thiol-dependent hydrolysis of ester, thioester, amide, peptide and isopeptide bonds formed by the C-terminal Gly of ubiquitin (a 76-residue protein attached to proteins as an intracellular targeting signal).. With respect to regulation, inhibited by monoubiquitin and diubiquitin. Deubiquitinating enzyme (DUB) that controls levels of cellular ubiquitin through processing of ubiquitin precursors and ubiquitinated proteins. Thiol protease that recognizes and hydrolyzes a peptide bond at the C-terminal glycine of either ubiquitin or NEDD8. Has a 10-fold preference for Arg and Lys at position P3''. Deubiquitinates ENAC in apical compartments, thereby regulating apical membrane recycling. Indirectly increases the phosphorylation of IGFIR, AKT and FOXO1 and promotes insulin-signaling and insulin-induced adipogenesis. Required for stress-response retinal, skeletal muscle and germ cell maintenance. May be involved in working memory. Can hydrolyze UBB(+1), a mutated form of ubiquitin which is not effectively degraded by the proteasome. This is Ubiquitin carboxyl-terminal hydrolase isozyme L3 (UCHL3) from Bos taurus (Bovine).